The primary structure comprises 611 residues: Actin-interacting protein 1 (611 aa).

WD repeat units follow at residues 57–96 (EHSHQTTVAKTSPSGYYCASGDVHGNVRIWDTTQTTHILK), 145–185 (GQAR…FKST), 188–227 (EHTKFVHSVRYNPDGSLFASTGGDGTIVLYNGVDGTKTGV), 237–276 (AHSGSVFGLTWSPDGTKIASASADKTIKIWNVATLKVEKT), 322–361 (GHNKAITALSSSADGKTLFSADAEGHINSWDISTGISNRV), 446–485 (PISYNSSCVALSNDKQFVAVGGQDSKVHVYKLSGASVSEV), 489–528 (VHPAEITSVAFSNNGAFLVATDQSRKVIPYSVANNFELAH), 534–573 (FHTAKVACVSWSPDNVRLATGSLDNSVIVWNMNKPSDHPI), and 579–610 (HAMSSVNSVIWLNETTIVSAGQDSNIKFWNVP).

Belongs to the WD repeat AIP1 family.

It is found in the cytoplasm. Its subcellular location is the cytoskeleton. In terms of biological role, induces disassembly of actin filaments in conjunction with ADF/cofilin family proteins. Regulator of actin organization in myofibrils. In Caenorhabditis elegans, this protein is Actin-interacting protein 1 (unc-78).